Consider the following 235-residue polypeptide: Probable membrane-associated kinase regulator 6 (235 aa).

The tract at residues serine 108–serine 140 is disordered. Positions glycine 130–serine 140 are enriched in polar residues.

It is found in the cell membrane. In terms of biological role, may be involved in abscisic acid signaling by acting as a kinase regulator. The protein is Probable membrane-associated kinase regulator 6 (MAKR6) of Arabidopsis thaliana (Mouse-ear cress).